Reading from the N-terminus, the 1385-residue chain is MSEKTKKTKRLDDLNFFDFDAIKLGIASPEQIMAWSHGEVKKPETINYRTLKPERDGLFCERIFGPTKDYECSCGKYRWVKYKGMQCDRCGVEITEAKVRRERMGHLELAVPVAHVWFLRKNPSRIGIMLDMRITDLERVVYYASYVVVEDCIDSVTGRTDYKKGELLTDVQVREARKKHGSRLKVDIGAPAVKKLLSDIDFDKEIPTLHVQLAETQSELERTKLIRRIKTMEEFKASGNRPEWMILSVLPVIPPDLRPLVPLDGGRFAASDLNDLYRRIINRNNRLKHIESLRAPEVMIYNEKRLLQEAVDALIENGARGKFFIGAGGRPLKSLSDVIKGKHGRFRQNLLGKRVDYSGRSVIVVGPSLKLHQCGLPKLMALELFKPFIIGELMKKEGVTLKAAKKMLERVRPEIWDILEQVTKNHPVMLNRAPTLHRLGIQAFEPVLIEGKAIQLHPLTCAAFNADFDGDQMAVHVPLSLEAQLEARTLMLATNNILSPASGRPIAAPSHDIVMGISFLTKVKLNDFGEGAVFGSMEEALMAYAYGKVSLHARIKVRGITAIKEDGMNEKDLKNVNTWKDYTTVGKIIFNNNLPEGWPYVNGAVGKKELAAIIDECYKSKKYGKYETVQLLDRIMKLGYNYATRSGLSISIADMIVPAAKQKYIDAAKKRIKEIQGQAEAGIITEGERYNKVIDIWTRVTDDVAVEQFKEMKKFEEAPYSGEGQRFNSVFLMADSGARGSRQQVRQLAGMRGLMAKPQKKLTGGQGEIIESPITSNFREGLSVLEYFISTHGGRKGLSDTALKTAEAGYLTRRLIDVAHNLVVMEEDCGTTNGVVVSSLMSGEEVVEPIEERILGRTSLEDVIVKIKKADGKEEEKTIIKEGDSITLEQSKLVKKYGVQNLRIRSVLTCESKNGVCGKCYGVSLVSGNISNVGDSVGIIAAQSIGEPGTQLTLRTFHIGGAASRMLSQSQAVAELGGKVTFKDIKVITNRFDNKICISRNGAIFVEAANGTIKEYKIQYGATLHIADKVTVEKGTLMAEWDPHSIPVLSETEGTARLTDVSEGITLQEERNKVTGVIERKITASRMGKKNPRIVIEGKGGKKVSLPLPVDTILLVENGEDVLAGDILAKIAKASGGTKDITSGLPRIAELFEARKPRNAAIMSEFAGVVSLETSPKGLVEIVVRSEETGQVKQYAVPQGKHLVVYEGDHVGVGEALTDGAIDPHDVLRVKGIKEVQEFLLNAIQEVYRLQGVTINDRHIEVIVRQMLGNVKIVDAGDTPLLKGEIVSRATLLKHNAQAEKEGKKIAVGDPILLGISKASLASDSFISAASFQETTKVLTDAAITGQVDTLQGLKENVIVGHLIPAGTGISAREFTKEFEAAKKK.

4 residues coordinate Zn(2+): C72, C74, C87, and C90. Residues D467, D469, and D471 each contribute to the Mg(2+) site. Zn(2+)-binding residues include C829, C910, C917, and C920.

It belongs to the RNA polymerase beta' chain family. As to quaternary structure, the RNAP catalytic core consists of 2 alpha, 1 beta, 1 beta' and 1 omega subunit. When a sigma factor is associated with the core the holoenzyme is formed, which can initiate transcription. The cofactor is Mg(2+). Zn(2+) serves as cofactor.

The enzyme catalyses RNA(n) + a ribonucleoside 5'-triphosphate = RNA(n+1) + diphosphate. In terms of biological role, DNA-dependent RNA polymerase catalyzes the transcription of DNA into RNA using the four ribonucleoside triphosphates as substrates. The sequence is that of DNA-directed RNA polymerase subunit beta' from Elusimicrobium minutum (strain Pei191).